An 87-amino-acid polypeptide reads, in one-letter code: Large ribosomal subunit protein bL31B (87 aa).

It belongs to the bacterial ribosomal protein bL31 family. Type B subfamily. In terms of assembly, part of the 50S ribosomal subunit.

This is Large ribosomal subunit protein bL31B from Escherichia coli O9:H4 (strain HS).